Here is a 412-residue protein sequence, read N- to C-terminus: Propionate kinase (412 aa).

This sequence belongs to the acetokinase family. PduW subfamily.

The protein resides in the cytoplasm. The enzyme catalyses propanoate + ATP = propanoyl phosphate + ADP. The protein operates within polyol metabolism; 1,2-propanediol degradation. In terms of biological role, works with phosphate acetyltransferase (pta) to capture exogenous propionate and regenerate propionyl-CoA during degradation of 1,2-propanediol (1,2-PD). This Yersinia enterocolitica serotype O:8 / biotype 1B (strain NCTC 13174 / 8081) protein is Propionate kinase.